A 260-amino-acid polypeptide reads, in one-letter code: Recombination-promoting nuclease RpnD (260 aa).

This sequence belongs to the Rpn/YhgA-like nuclease family.

Its function is as follows. A low activity DNA endonuclease probably yielding 3'-hydroxyl ends. Involved in RecA-independent recombination and horizontal gene transfer. The protein is Recombination-promoting nuclease RpnD (rpnD) of Escherichia coli O157:H7.